The following is a 492-amino-acid chain: 3-octaprenyl-4-hydroxybenzoate carboxy-lyase (492 aa).

Asn177 contributes to the Mn(2+) binding site. Residues 180-182 (IYR), 194-196 (RWL), and 199-200 (RG) each bind prenylated FMN. Position 243 (Glu243) interacts with Mn(2+). Residue Asp292 is the Proton donor of the active site.

The protein belongs to the UbiD family. In terms of assembly, homohexamer. The cofactor is prenylated FMN. Mn(2+) serves as cofactor.

The protein localises to the cell membrane. It catalyses the reaction a 4-hydroxy-3-(all-trans-polyprenyl)benzoate + H(+) = a 2-(all-trans-polyprenyl)phenol + CO2. It functions in the pathway cofactor biosynthesis; ubiquinone biosynthesis. Its function is as follows. Catalyzes the decarboxylation of 3-octaprenyl-4-hydroxy benzoate to 2-octaprenylphenol, an intermediate step in ubiquinone biosynthesis. This Neisseria gonorrhoeae (strain ATCC 700825 / FA 1090) protein is 3-octaprenyl-4-hydroxybenzoate carboxy-lyase.